The chain runs to 81 residues: Pyruvate synthase subunit PorD (81 aa).

The segment at 1–20 (MESLGATVKEPGSTRKNKTG) is disordered. 2 consecutive 4Fe-4S ferredoxin-type domains span residues 25-54 (FKPFLDKDKCIDCDNCILFCPEGCIDKEHE) and 51-80 (KEHEIDYDYCKGCGICAEECPVKAIKMERE). 8 residues coordinate [4Fe-4S] cluster: Cys34, Cys37, Cys40, Cys44, Cys60, Cys63, Cys66, and Cys70.

In terms of assembly, heterotetramer of one alpha, one beta, one delta and one gamma chain. [4Fe-4S] cluster serves as cofactor.

This chain is Pyruvate synthase subunit PorD (porD), found in Methanothermobacter marburgensis (strain ATCC BAA-927 / DSM 2133 / JCM 14651 / NBRC 100331 / OCM 82 / Marburg) (Methanobacterium thermoautotrophicum).